Consider the following 595-residue polypeptide: Pentatricopeptide repeat-containing protein At4g21065 (595 aa).

PPR repeat units lie at residues 84 to 118, 120 to 154, 155 to 185, 186 to 220, 221 to 255, 256 to 290, 291 to 317, 323 to 353, and 359 to 389; these read NVFI…GLVE, DTHT…GFGS, LIYV…MPEK, DLVA…GIKP, DGFT…GLTR, NLHS…NSVS, WTSL…MEST, CEIT…MREE, and RIEH…MPMQ. The interval 394-469 is type E motif; the sequence is IWRTLLGACT…VPGHSLVEVG (76 aa). Residues 470–500 are type E(+) motif; sequence NRVHEFLMGDKSHPQSDAIYAKLKEMTGRLR. The type DYW motif stretch occupies residues 501–595; that stretch reads SEGYVPQISN…NGSCSCQDYW (95 aa).

The protein belongs to the PPR family. PCMP-H subfamily.

This is Pentatricopeptide repeat-containing protein At4g21065 (PCMP-H28) from Arabidopsis thaliana (Mouse-ear cress).